The following is a 462-amino-acid chain: UDP-N-acetylmuramoylalanine--D-glutamate ligase (462 aa).

111–117 (GTNGKTT) lines the ATP pocket.

Belongs to the MurCDEF family.

The protein localises to the cytoplasm. It carries out the reaction UDP-N-acetyl-alpha-D-muramoyl-L-alanine + D-glutamate + ATP = UDP-N-acetyl-alpha-D-muramoyl-L-alanyl-D-glutamate + ADP + phosphate + H(+). It participates in cell wall biogenesis; peptidoglycan biosynthesis. Cell wall formation. Catalyzes the addition of glutamate to the nucleotide precursor UDP-N-acetylmuramoyl-L-alanine (UMA). This Trichodesmium erythraeum (strain IMS101) protein is UDP-N-acetylmuramoylalanine--D-glutamate ligase.